The sequence spans 181 residues: TATA-box-binding protein (181 aa).

Repeat copies occupy residues 8 to 84 (IENI…VDLM) and 99 to 175 (IQNI…YDRL).

This sequence belongs to the TBP family.

General factor that plays a role in the activation of archaeal genes transcribed by RNA polymerase. Binds specifically to the TATA box promoter element which lies close to the position of transcription initiation. In Methanobrevibacter smithii (strain ATCC 35061 / DSM 861 / OCM 144 / PS), this protein is TATA-box-binding protein.